Consider the following 318-residue polypeptide: uncharacterized protein (318 aa).

Belongs to the NAD(P)-dependent epimerase/dehydratase family.

This is an uncharacterized protein from Staphylococcus haemolyticus (strain JCSC1435).